The chain runs to 351 residues: MALNIASIRDTKWLTLEVCRQFQRGTCSRSDEECKFAHPPKSCQVENGRVIACFDSLKGRCTRENCKYLHPPAHLKTQLEINGRNNLIQQKTAAAMLAQQMQFMIPSTTMQHVQTFPVNQGLGSSAGLSYTPYLTPMSHSMGLVPTDILPSTPVIVPGSPPVSVTAGSSSNQKLLRTDKLEVCREFQRGNCARGETDCRFAHPSDSPMIDTSDNTVTVCMDYIKSRCSREKCKYFHPPAHLQAKVKAAQHQANQTAVAAQAAATAAAMTQSTAKAMKRPLEATVDLAFPHSGLQPLPKRPALEKSNGSSSLFNPSVLHYQQALANAQLQQPAFFPTGSVLCMTPASSLGRS.

C3H1-type zinc fingers lie at residues 13-41, 47-73, 177-205, and 213-239; these read WLTL…HPPK, NGRV…HPPA, TDKL…HPSD, and DNTV…HPPA.

This sequence belongs to the muscleblind family. Expressed in fast and slow myotomal muscle, heart, liver, skin, brain and testis.

Its subcellular location is the nucleus. It is found in the cytoplasm. Its function is as follows. Involved in pre-mRNA alternative splicing regulation. RNA-binding protein that binds to 5'ACACCC-3' core sequence. The sequence is that of Muscleblind-like protein 2a (mbnl2a) from Takifugu rubripes (Japanese pufferfish).